The primary structure comprises 203 residues: E3 ubiquitin-protein ligase RNF152 (203 aa).

The RING-type zinc finger occupies 12-55 (CQICFNYYSPRRRPKLLDCKHTCCSVCLQQMRTSQKDLRCPWCR). Residues 167 to 187 (SGVCTVILVACVLVFLLGIVL) form a helical membrane-spanning segment.

This sequence belongs to the RNF152 family.

It is found in the lysosome membrane. It carries out the reaction S-ubiquitinyl-[E2 ubiquitin-conjugating enzyme]-L-cysteine + [acceptor protein]-L-lysine = [E2 ubiquitin-conjugating enzyme]-L-cysteine + N(6)-ubiquitinyl-[acceptor protein]-L-lysine.. It functions in the pathway protein modification; protein ubiquitination. Functionally, E3 ubiquitin-protein ligase that acts as a negative regulator of mTORC1 signaling by mediating ubiquitination of RagA/RRAGA and RHEB. Catalyzes 'Lys-63'-linked polyubiquitination of RagA/RRAGA in response to amino acid starvation, thereby regulating mTORC1 signaling. Also mediates monoubiquitination of RHEB, promoting its association with the TSC-TBC complex and subsequent inhibition. Also mediates 'Lys-48'-linked polyubiquitination of target proteins and their subsequent targeting to the proteasome for degradation. This chain is E3 ubiquitin-protein ligase RNF152, found in Gallus gallus (Chicken).